We begin with the raw amino-acid sequence, 200 residues long: MSFSPLIRQLIDGLRILPGVGQKTAQRMALQLLERDRSGGLRLAQALTQAMEGVGHCRQCRTLTEQELCPQCADTRRDDTQLCVVEGPTDVYAVEQTGYRGRYFVLKGHLSPLDGLGPEAIGIPQLMARIEEQGTFTEVILATNPTVEGEATAHYIAQLLSEKGLAATRIAHGVPLGGELELVDGGTLAHAIAGRRPISL.

The C4-type zinc-finger motif lies at 57–72; the sequence is CRQCRTLTEQELCPQC. One can recognise a Toprim domain in the interval 80-175; the sequence is TQLCVVEGPT…AATRIAHGVP (96 aa).

This sequence belongs to the RecR family.

In terms of biological role, may play a role in DNA repair. It seems to be involved in an RecBC-independent recombinational process of DNA repair. It may act with RecF and RecO. This Pseudomonas putida (strain GB-1) protein is Recombination protein RecR.